A 161-amino-acid polypeptide reads, in one-letter code: Lipoprotein signal peptidase (161 aa).

4 helical membrane passes run 8–28 (LKYF…KYLA), 40–60 (ITSF…SLLS), 67–87 (QMIM…YLII), and 91–111 (ITEK…LGNF). Active-site residues include D122 and D140. A helical transmembrane segment spans residues 136 to 156 (FNIADSAITCGVVILIAASLF).

It belongs to the peptidase A8 family.

The protein resides in the cell inner membrane. It catalyses the reaction Release of signal peptides from bacterial membrane prolipoproteins. Hydrolyzes -Xaa-Yaa-Zaa-|-(S,diacylglyceryl)Cys-, in which Xaa is hydrophobic (preferably Leu), and Yaa (Ala or Ser) and Zaa (Gly or Ala) have small, neutral side chains.. It participates in protein modification; lipoprotein biosynthesis (signal peptide cleavage). In terms of biological role, this protein specifically catalyzes the removal of signal peptides from prolipoproteins. The polypeptide is Lipoprotein signal peptidase (Francisella tularensis subsp. novicida (strain U112)).